Consider the following 248-residue polypeptide: 3,4-dihydroxyphthalate decarboxylase (248 aa).

Glu90 functions as the Proton donor/acceptor in the catalytic mechanism. Glu90, His109, His111, and His177 together coordinate a divalent metal cation.

It belongs to the aldolase class II family. A divalent metal cation serves as cofactor.

It catalyses the reaction 3,4-dihydroxyphthalate + H(+) = 3,4-dihydroxybenzoate + CO2. It functions in the pathway xenobiotic degradation; phthalate degradation. Functionally, catalyzes the decarboxylation of 3,4-dihydroxyphthalate to protocatechuate (3,4-dihydroxybenzoate) during phthalate metabolism. This is 3,4-dihydroxyphthalate decarboxylase from Arthrobacter keyseri.